The chain runs to 1072 residues: Carbamoyl phosphate synthase large chain (1072 aa).

A carboxyphosphate synthetic domain region spans residues 1 to 401 (MPKRLDINTI…SLLKAVRSLE (401 aa)). Residues arginine 129, arginine 169, glycine 175, glycine 176, lysine 208, isoleucine 210, glutamate 215, glycine 241, valine 242, histidine 243, glutamine 284, and glutamate 298 each contribute to the ATP site. One can recognise an ATP-grasp 1 domain in the interval 133–327 (RTLMQELNEP…IAKLAAKIAV (195 aa)). Residues glutamine 284, glutamate 298, and asparagine 300 each contribute to the Mg(2+) site. Mn(2+) is bound by residues glutamine 284, glutamate 298, and asparagine 300. The interval 402-546 (LGIYHLELDH…YSTYADENES (145 aa)) is oligomerization domain. The tract at residues 547-929 (IVTDRKSVVV…ALYKGLVASG (383 aa)) is carbamoyl phosphate synthetic domain. An ATP-grasp 2 domain is found at 671-861 (EAALTKLGIP…MANVATKVIL (191 aa)). ATP is bound by residues arginine 707, arginine 746, glutamate 752, glycine 777, valine 778, histidine 779, serine 780, glutamine 820, and glutamate 832. Positions 820, 832, and 834 each coordinate Mg(2+). Mn(2+) contacts are provided by glutamine 820, glutamate 832, and asparagine 834. An MGS-like domain is found at 930–1072 (INIPTHGSVI…QTKRHEVVHA (143 aa)). Residues 930-1072 (INIPTHGSVI…QTKRHEVVHA (143 aa)) are allosteric domain.

The protein belongs to the CarB family. Composed of two chains; the small (or glutamine) chain promotes the hydrolysis of glutamine to ammonia, which is used by the large (or ammonia) chain to synthesize carbamoyl phosphate. Tetramer of heterodimers (alpha,beta)4. The cofactor is Mg(2+). Requires Mn(2+) as cofactor.

The catalysed reaction is hydrogencarbonate + L-glutamine + 2 ATP + H2O = carbamoyl phosphate + L-glutamate + 2 ADP + phosphate + 2 H(+). It catalyses the reaction hydrogencarbonate + NH4(+) + 2 ATP = carbamoyl phosphate + 2 ADP + phosphate + 2 H(+). It participates in amino-acid biosynthesis; L-arginine biosynthesis; carbamoyl phosphate from bicarbonate: step 1/1. Its pathway is pyrimidine metabolism; UMP biosynthesis via de novo pathway; (S)-dihydroorotate from bicarbonate: step 1/3. In terms of biological role, large subunit of the glutamine-dependent carbamoyl phosphate synthetase (CPSase). CPSase catalyzes the formation of carbamoyl phosphate from the ammonia moiety of glutamine, carbonate, and phosphate donated by ATP, constituting the first step of 2 biosynthetic pathways, one leading to arginine and/or urea and the other to pyrimidine nucleotides. The large subunit (synthetase) binds the substrates ammonia (free or transferred from glutamine from the small subunit), hydrogencarbonate and ATP and carries out an ATP-coupled ligase reaction, activating hydrogencarbonate by forming carboxy phosphate which reacts with ammonia to form carbamoyl phosphate. In Bacillus thuringiensis subsp. konkukian (strain 97-27), this protein is Carbamoyl phosphate synthase large chain.